Reading from the N-terminus, the 1959-residue chain is Zinc finger protein hangover (1959 aa).

The 77-residue stretch at 79–155 folds into the ZAD domain; the sequence is NCCRLCIAPQ…FSSQAKQRQW (77 aa). Zn(2+)-binding residues include Cys-81, Cys-84, Cys-128, and Cys-131. The segment at 178 to 208 is disordered; sequence GFFDQHLHQQQQHHQHLENELEAEKEKATPT. Residues 192–205 show a composition bias toward basic and acidic residues; it reads QHLENELEAEKEKA. Phosphoserine is present on Ser-228. At Thr-246 the chain carries Phosphothreonine. The C2H2-type 1 zinc finger occupies 318 to 341; the sequence is ASCRACSLQFSTRANARRHERNLH. The segment at 447–469 adopts a C2H2-type 2; degenerate zinc-finger fold; it reads MTCRCCNKYFSTYKNFMAHVRKK. The segment at 581-604 adopts a C2H2-type 3 zinc-finger fold; the sequence is YECKLCPKGFRTKHEFRTHVYDKH. The disordered stretch occupies residues 674 to 762; that stretch reads AVSDNASTTG…ANRDASAPKS (89 aa). The segment covering 677–693 has biased composition (polar residues); sequence DNASTTGSGMARSNSME. Phosphoserine is present on Ser-680. Composition is skewed to low complexity over residues 716-727 and 741-759; these read SSSAAPPLTSTP and TSAS…DASA. 2 C2H2-type zinc fingers span residues 770–793 and 801–824; these read QVCP…ESKH and YKCV…INVH. A phosphoserine mark is found at Ser-832, Ser-894, Ser-895, Ser-898, and Ser-899. A C2H2-type 6 zinc finger spans residues 908 to 930; that stretch reads KECPICNAVFSNNIGLSNHMRSH. The segment at 960–991 is disordered; sequence TDSELGVGGTMSESAPATPANVPPAMANQTPQ. 5 consecutive C2H2-type zinc fingers follow at residues 1011–1034, 1042–1065, 1078–1101, 1154–1176, and 1184–1207; these read MRCR…LTDH, IKCK…FKVH, FECD…RSVH, YQCK…INSH, and YSCK…YKKH. Over residues 1233-1253 the composition is skewed to polar residues; it reads TPTCNRKPITSTGAHQQQDGQ. The interval 1233–1301 is disordered; it reads TPTCNRKPIT…GNGTTVGVAS (69 aa). Residues 1255–1267 are compositionally biased toward basic residues; it reads HSHHTAKRTIFRH. The span at 1271-1283 shows a compositional bias: acidic residues; the sequence is DDDDEEDDDEQQQ. 2 consecutive C2H2-type zinc fingers follow at residues 1318 to 1340 and 1375 to 1397; these read VACT…IQKH and YACD…RKWH. The span at 1445-1467 shows a compositional bias: low complexity; it reads QQSLNNSCNSSMNHNNNSSSNRS. The tract at residues 1445–1471 is disordered; that stretch reads QQSLNNSCNSSMNHNNNSSSNRSKSMK. 2 consecutive C2H2-type zinc fingers follow at residues 1476-1499 and 1552-1574; these read LKCE…YELH and WGCD…INNH. The interval 1627 to 1865 is disordered; sequence AAGATTTDKL…STGERRKKAV (239 aa). A compositionally biased stretch (acidic residues) spans 1639–1695; that stretch reads PDEEDSDDLDEDSSGDDDDSSGTGDDDDDDDSDDDEDGEGEDEDEEGDGGEGEDEEG. The span at 1697–1715 shows a compositional bias: low complexity; the sequence is QPPAQLLPQQQHKTDLNLN. Composition is skewed to acidic residues over residues 1716-1758 and 1782-1829; these read QDDD…EEPE and SDDE…EDEP. Low complexity predominate over residues 1833-1851; sequence STASFSESESSTTTTSNSH. The C2H2-type 16 zinc finger occupies 1873–1895; sequence FTCDLCQLCFDSQELLQSHIKSH. The tract at residues 1933 to 1959 is disordered; it reads PDSKSAVLANNNNSKTSSKTVAAGATN. Residues 1942–1952 show a composition bias toward low complexity; the sequence is NNNNSKTSSKT.

Expressed ubiquitously in the nervous system, in neurons not glia.

It localises to the nucleus. In terms of biological role, required for normal development of ethanol tolerance. Relies on two distinct molecular pathways: a cellular stress pathway defined by hang, and a parallel pathway requiring octopamine. In Drosophila melanogaster (Fruit fly), this protein is Zinc finger protein hangover (hang).